The chain runs to 279 residues: Probable cyclic nucleotide phosphodiesterase Psyc_2036 (279 aa).

7 residues coordinate Fe cation: D23, H25, D70, N100, H179, H218, and H220. Residues H25, D70, and 100 to 101 each bind AMP; that span reads NH. H220 provides a ligand contact to AMP.

Belongs to the cyclic nucleotide phosphodiesterase class-III family. It depends on Fe(2+) as a cofactor.

This is Probable cyclic nucleotide phosphodiesterase Psyc_2036 from Psychrobacter arcticus (strain DSM 17307 / VKM B-2377 / 273-4).